The sequence spans 293 residues: NAD kinase (293 aa).

The Proton acceptor role is filled by aspartate 74. NAD(+)-binding positions include 74–75, 148–149, histidine 159, arginine 176, aspartate 178, threonine 186, 189–194, and glutamine 248; these read DG, NE, and TAYSLS.

It belongs to the NAD kinase family. As to quaternary structure, homodimer. It depends on a divalent metal cation as a cofactor.

Its subcellular location is the cytoplasm. The enzyme catalyses NAD(+) + ATP = ADP + NADP(+) + H(+). Its function is as follows. Involved in the regulation of the intracellular balance of NAD and NADP, and is a key enzyme in the biosynthesis of NADP. Catalyzes specifically the phosphorylation on 2'-hydroxyl of the adenosine moiety of NAD to yield NADP. This Yersinia pestis protein is NAD kinase.